The sequence spans 110 residues: MCCRRVFRLSHRKEGMESARQTKRVRVYVSGRVQGVFFRDSTRERAERLGVSGWVRNLPDGRVEAVFEGEAGAVDELVRWCHEGPPHARVEGVEVEEEPASGGARGFEVR.

In terms of domain architecture, Acylphosphatase-like spans 24-110 (RVRVYVSGRV…SGGARGFEVR (87 aa)). Catalysis depends on residues arginine 39 and asparagine 57.

The protein belongs to the acylphosphatase family.

It carries out the reaction an acyl phosphate + H2O = a carboxylate + phosphate + H(+). The protein is Acylphosphatase (acyP) of Rubrobacter xylanophilus (strain DSM 9941 / JCM 11954 / NBRC 16129 / PRD-1).